We begin with the raw amino-acid sequence, 610 residues long: Lipoprotein LpqB (610 aa).

Positions 1-27 are cleaved as a signal peptide; that stretch reads MGAEGGGRRRALRLGAYVGCGAVLLTG. Residue Cys28 is the site of N-palmitoyl cysteine attachment. Cys28 is lipidated: S-diacylglycerol cysteine.

It belongs to the LpqB lipoprotein family.

Its subcellular location is the cell membrane. In Streptomyces avermitilis (strain ATCC 31267 / DSM 46492 / JCM 5070 / NBRC 14893 / NCIMB 12804 / NRRL 8165 / MA-4680), this protein is Lipoprotein LpqB.